A 151-amino-acid chain; its full sequence is Probable cGMP 3',5'-cyclic phosphodiesterase subunit delta (151 aa).

The protein belongs to the PDE6D/unc-119 family. As to quaternary structure, interacts with Pde6.

Its subcellular location is the nucleus. The protein resides in the cytoplasm. In Drosophila erecta (Fruit fly), this protein is Probable cGMP 3',5'-cyclic phosphodiesterase subunit delta.